The sequence spans 249 residues: MFHGKHPGGLSERGRALLLEGGKALGLDLKPHLEAFSRLYALLQEASGKVNLTALRGEEEVVVKHFLDSLTLLRLPLWQGPLRVLDLGTGAGFPGLPLKIVRPELELVLVDATRKKVAFVERAIEVLGLKGARALWGRAEVLAREAGHREAYARAVARAVAPLCVLSELLLPFLEVGGAAVAMKGPRVEEELAPLPPALERLGGRLGEVLALQLPLSGEARHLVVLEKTAPTPPAYPRRPGVPERHPLC.

Residues glycine 88, phenylalanine 93, 111–113 (DAT), 139–140 (AE), and arginine 158 each bind S-adenosyl-L-methionine. The cysteines at positions 164 and 249 are disulfide-linked. The segment at 245–246 (RH) is RNA binding.

The protein belongs to the methyltransferase superfamily. RNA methyltransferase RsmG family.

Its subcellular location is the cytoplasm. It catalyses the reaction guanosine(527) in 16S rRNA + S-adenosyl-L-methionine = N(7)-methylguanosine(527) in 16S rRNA + S-adenosyl-L-homocysteine. In terms of biological role, specifically methylates the N7 position of guanine in position 527 of 16S rRNA. Shows a marked preference for deproteinized 16S rRNA as substrate and is completely inactive with native 30S subunits as substrate. In Thermus thermophilus (strain ATCC 27634 / DSM 579 / HB8), this protein is Ribosomal RNA small subunit methyltransferase G.